The following is a 155-amino-acid chain: Transcriptional repressor NrdR (155 aa).

A zinc finger spans residues 3–34; it reads CPYCQNADTRVVDSRLIGEGEQVRRRRQCPSC. The region spanning 49–139 is the ATP-cone domain; that stretch reads PRVVKSDGRR…VYRRFEDVGA (91 aa).

The protein belongs to the NrdR family. It depends on Zn(2+) as a cofactor.

In terms of biological role, negatively regulates transcription of bacterial ribonucleotide reductase nrd genes and operons by binding to NrdR-boxes. This Halorhodospira halophila (strain DSM 244 / SL1) (Ectothiorhodospira halophila (strain DSM 244 / SL1)) protein is Transcriptional repressor NrdR.